Consider the following 436-residue polypeptide: GTPase Der (436 aa).

EngA-type G domains lie at 4–167 (PVVA…KNLP) and 176–351 (VQFC…ENHA). Residues 10-17 (GRPNVGKS), 57-61 (DTGGI), 119-122 (NKLD), 182-189 (GRPNVGKS), 229-233 (DTAGM), and 294-297 (NKWD) each bind GTP. Residues 352–436 (MRVQTNILND…PIKIFARARK (85 aa)) form the KH-like domain.

The protein belongs to the TRAFAC class TrmE-Era-EngA-EngB-Septin-like GTPase superfamily. EngA (Der) GTPase family. Associates with the 50S ribosomal subunit.

In terms of biological role, GTPase that plays an essential role in the late steps of ribosome biogenesis. This Bacillus pumilus (strain SAFR-032) protein is GTPase Der.